Reading from the N-terminus, the 338-residue chain is tRNA N6-adenosine threonylcarbamoyltransferase (338 aa).

Residues H111 and H115 each coordinate Fe cation. Substrate-binding positions include 134-138 (LVSGG), D167, G180, and N272. Position 300 (D300) interacts with Fe cation.

This sequence belongs to the KAE1 / TsaD family. Requires Fe(2+) as cofactor.

Its subcellular location is the cytoplasm. The catalysed reaction is L-threonylcarbamoyladenylate + adenosine(37) in tRNA = N(6)-L-threonylcarbamoyladenosine(37) in tRNA + AMP + H(+). Functionally, required for the formation of a threonylcarbamoyl group on adenosine at position 37 (t(6)A37) in tRNAs that read codons beginning with adenine. Is involved in the transfer of the threonylcarbamoyl moiety of threonylcarbamoyl-AMP (TC-AMP) to the N6 group of A37, together with TsaE and TsaB. TsaD likely plays a direct catalytic role in this reaction. The chain is tRNA N6-adenosine threonylcarbamoyltransferase from Shewanella pealeana (strain ATCC 700345 / ANG-SQ1).